Reading from the N-terminus, the 151-residue chain is Large ribosomal subunit protein uL22 (151 aa).

It belongs to the universal ribosomal protein uL22 family. Part of the 50S ribosomal subunit.

Its function is as follows. This protein binds specifically to 23S rRNA. It makes multiple contacts with different domains of the 23S rRNA in the assembled 50S subunit and ribosome. Functionally, the globular domain of the protein is located near the polypeptide exit tunnel on the outside of the subunit, while an extended beta-hairpin is found that lines the wall of the exit tunnel in the center of the 70S ribosome. The polypeptide is Large ribosomal subunit protein uL22 (Thermofilum pendens (strain DSM 2475 / Hrk 5)).